The sequence spans 717 residues: DNA ligase (717 aa).

Residues 44–48, 93–94, and glutamate 127 contribute to the NAD(+) site; these read DADYD and SL. The active-site N6-AMP-lysine intermediate is lysine 129. The NAD(+) site is built by arginine 150, glutamate 186, lysine 302, and lysine 326. Residues cysteine 431, cysteine 434, cysteine 455, and cysteine 461 each contribute to the Zn(2+) site. Residues 639–717 enclose the BRCT domain; the sequence is ATDSPVAGKT…EDEWLALIGG (79 aa).

This sequence belongs to the NAD-dependent DNA ligase family. LigA subfamily. Mg(2+) is required as a cofactor. Mn(2+) serves as cofactor.

It catalyses the reaction NAD(+) + (deoxyribonucleotide)n-3'-hydroxyl + 5'-phospho-(deoxyribonucleotide)m = (deoxyribonucleotide)n+m + AMP + beta-nicotinamide D-nucleotide.. DNA ligase that catalyzes the formation of phosphodiester linkages between 5'-phosphoryl and 3'-hydroxyl groups in double-stranded DNA using NAD as a coenzyme and as the energy source for the reaction. It is essential for DNA replication and repair of damaged DNA. This is DNA ligase from Rhizobium meliloti (strain 1021) (Ensifer meliloti).